We begin with the raw amino-acid sequence, 359 residues long: Peptide chain release factor 1 (359 aa).

N5-methylglutamine is present on Q236.

Belongs to the prokaryotic/mitochondrial release factor family. Methylated by PrmC. Methylation increases the termination efficiency of RF1.

The protein resides in the cytoplasm. Functionally, peptide chain release factor 1 directs the termination of translation in response to the peptide chain termination codons UAG and UAA. This Streptococcus pneumoniae serotype 4 (strain ATCC BAA-334 / TIGR4) protein is Peptide chain release factor 1.